The primary structure comprises 761 residues: uncharacterized protein (761 aa).

The CR-type zinc-finger motif lies at methionine 1–cysteine 84. An S1 motif domain is found at glycine 135–isoleucine 200.

This is an uncharacterized protein from Methanocaldococcus jannaschii (strain ATCC 43067 / DSM 2661 / JAL-1 / JCM 10045 / NBRC 100440) (Methanococcus jannaschii).